A 446-amino-acid chain; its full sequence is Phosphoglucosamine mutase (446 aa).

S101 (phosphoserine intermediate) is an active-site residue. Residues S101, D240, D242, and D244 each contribute to the Mg(2+) site. Residue S101 is modified to Phosphoserine.

Belongs to the phosphohexose mutase family. Requires Mg(2+) as cofactor. In terms of processing, activated by phosphorylation.

The enzyme catalyses alpha-D-glucosamine 1-phosphate = D-glucosamine 6-phosphate. Functionally, catalyzes the conversion of glucosamine-6-phosphate to glucosamine-1-phosphate. This is Phosphoglucosamine mutase from Pseudomonas putida (strain ATCC 47054 / DSM 6125 / CFBP 8728 / NCIMB 11950 / KT2440).